The sequence spans 488 residues: L-arabinose isomerase 2 (488 aa).

Residues glutamate 306, glutamate 331, histidine 348, and histidine 447 each coordinate Mn(2+).

Belongs to the arabinose isomerase family. Requires Mn(2+) as cofactor.

It catalyses the reaction beta-L-arabinopyranose = L-ribulose. Its pathway is carbohydrate degradation; L-arabinose degradation via L-ribulose; D-xylulose 5-phosphate from L-arabinose (bacterial route): step 1/3. In terms of biological role, catalyzes the conversion of L-arabinose to L-ribulose. This Clostridium acetobutylicum (strain ATCC 824 / DSM 792 / JCM 1419 / IAM 19013 / LMG 5710 / NBRC 13948 / NRRL B-527 / VKM B-1787 / 2291 / W) protein is L-arabinose isomerase 2.